The primary structure comprises 274 residues: NH(3)-dependent NAD(+) synthetase (274 aa).

Residue 46-53 (GISGGQDS) coordinates ATP. Position 52 (Asp52) interacts with Mg(2+). Arg140 serves as a coordination point for deamido-NAD(+). Thr160 is an ATP binding site. Glu165 is a binding site for Mg(2+). Lys173 and Asp180 together coordinate deamido-NAD(+). Residues Lys189 and Thr211 each contribute to the ATP site. Residue 260–261 (HK) participates in deamido-NAD(+) binding.

The protein belongs to the NAD synthetase family. Homodimer.

It carries out the reaction deamido-NAD(+) + NH4(+) + ATP = AMP + diphosphate + NAD(+) + H(+). It participates in cofactor biosynthesis; NAD(+) biosynthesis; NAD(+) from deamido-NAD(+) (ammonia route): step 1/1. Functionally, catalyzes the ATP-dependent amidation of deamido-NAD to form NAD. Uses ammonia as a nitrogen source. This Listeria welshimeri serovar 6b (strain ATCC 35897 / DSM 20650 / CCUG 15529 / CIP 8149 / NCTC 11857 / SLCC 5334 / V8) protein is NH(3)-dependent NAD(+) synthetase.